The chain runs to 485 residues: Glutamyl-tRNA(Gln) amidotransferase subunit A (485 aa).

Residues Lys-79 and Ser-154 each act as charge relay system in the active site. The active-site Acyl-ester intermediate is Ser-178.

It belongs to the amidase family. GatA subfamily. Heterotrimer of A, B and C subunits.

It carries out the reaction L-glutamyl-tRNA(Gln) + L-glutamine + ATP + H2O = L-glutaminyl-tRNA(Gln) + L-glutamate + ADP + phosphate + H(+). Its function is as follows. Allows the formation of correctly charged Gln-tRNA(Gln) through the transamidation of misacylated Glu-tRNA(Gln) in organisms which lack glutaminyl-tRNA synthetase. The reaction takes place in the presence of glutamine and ATP through an activated gamma-phospho-Glu-tRNA(Gln). This Clostridium botulinum (strain Alaska E43 / Type E3) protein is Glutamyl-tRNA(Gln) amidotransferase subunit A.